A 668-amino-acid polypeptide reads, in one-letter code: Potassium-transporting ATPase ATP-binding subunit (668 aa).

The next 4 helical transmembrane spans lie at Met31–Phe51, Phe62–Ala82, Thr213–Ile233, and Ile243–Pro263. Asp298 (4-aspartylphosphate intermediate) is an active-site residue. Residues Asp335, Glu339, Phe367–Ser374, and Lys385 contribute to the ATP site. Positions 504 and 508 each coordinate Mg(2+). 3 helical membrane passes run Tyr573–Leu593, Ile599–Leu619, and Ile644–Trp664.

The protein belongs to the cation transport ATPase (P-type) (TC 3.A.3) family. Type IA subfamily. As to quaternary structure, the system is composed of three essential subunits: KdpA, KdpB and KdpC.

Its subcellular location is the cell membrane. The enzyme catalyses K(+)(out) + ATP + H2O = K(+)(in) + ADP + phosphate + H(+). Its function is as follows. Part of the high-affinity ATP-driven potassium transport (or Kdp) system, which catalyzes the hydrolysis of ATP coupled with the electrogenic transport of potassium into the cytoplasm. This subunit is responsible for energy coupling to the transport system and for the release of the potassium ions to the cytoplasm. The chain is Potassium-transporting ATPase ATP-binding subunit from Thermoplasma volcanium (strain ATCC 51530 / DSM 4299 / JCM 9571 / NBRC 15438 / GSS1).